Here is a 926-residue protein sequence, read N- to C-terminus: G-protein coupled receptor family C group 6 member A (926 aa).

The first 18 residues, Met-1 to Ser-18, serve as a signal peptide directing secretion. Residues Gln-19–Ala-594 are Extracellular-facing. N-linked (GlcNAc...) asparagine glycans are attached at residues Asn-121, Asn-259, Asn-332, Asn-378, Asn-452, Asn-555, Asn-567, and Asn-590. The helical transmembrane segment at Ile-595–Phe-615 threads the bilayer. The Cytoplasmic portion of the chain corresponds to Thr-616–Arg-631. Residues Val-632 to Gly-652 form a helical membrane-spanning segment. Topologically, residues Glu-653–Ser-669 are extracellular. Residues Phe-670–Phe-690 form a helical membrane-spanning segment. Residues Asp-691–Pro-704 lie on the Cytoplasmic side of the membrane. A helical membrane pass occupies residues Ile-705 to Phe-725. At Ala-726–Ser-748 the chain is on the extracellular side. Residue Asn-733 is glycosylated (N-linked (GlcNAc...) asparagine). The chain crosses the membrane as a helical span at residues Ile-749–Phe-769. At Ala-770–Lys-782 the chain is on the cytoplasmic side. The helical transmembrane segment at Phe-783 to Ala-803 threads the bilayer. Topologically, residues Thr-804–Val-810 are extracellular. A helical transmembrane segment spans residues Pro-811–Ile-831. Residues Pro-832–Ile-926 are Cytoplasmic-facing.

The protein belongs to the G-protein coupled receptor 3 family. As to quaternary structure, homodimer; disulfide-linked. As to expression, isoform 1 is expressed at high level in brain, skeletal muscle, testis, bone, calvaria, osteoblasts and leukocytes. Expressed at intermediate level in liver, heart, kidney and spleen. Expressed at low level in lung, pancreas, placenta and ovary. Not detected in thymus, prostate, small intestine, tongue and colon. Isoform 1 and isoform 2 are expressed in kidney at the same level. Isoform 2 is expressed at lower level than isoform 1 in the other tissues.

Its subcellular location is the cell membrane. Its function is as follows. Receptor activated by multiple ligands, including osteocalcin (BGLAP), basic amino acids, and various cations. Activated by amino acids with a preference for basic amino acids such as L-Lys, L-Arg and L-ornithine but also by small and polar amino acids. The L-alpha amino acids respond is augmented by divalent cations Ca(2+) and Mg(2+). Seems to act through a G(q)/G(11) and G(i)-coupled pathway. Regulates testosterone production by acting as a ligand for uncarboxylated osteocalcin hormone: osteocalcin-binding at the surface of Leydig cells initiates a signaling response that promotes the expression of enzymes required for testosterone synthesis in a CREB-dependent manner. Mediates the non-genomic effects of androgens in multiple tissue. May coordinate nutritional and hormonal anabolic signals through the sensing of extracellular amino acids, osteocalcin, divalent ions and its responsiveness to anabolic steroids. The sequence is that of G-protein coupled receptor family C group 6 member A (GPRC6A) from Homo sapiens (Human).